Consider the following 844-residue polypeptide: Translation initiation factor IF-2 (844 aa).

The segment covering 1-11 (MTEDVKADVPK) has biased composition (basic and acidic residues). 2 disordered regions span residues 1 to 35 (MTED…SKAV) and 79 to 248 (RLEA…KGAA). The span at 21 to 33 (TTVSGTTTSGKSK) shows a compositional bias: low complexity. Over residues 79-161 (RLEAEKAATK…AAEEAKRYAE (83 aa)) the composition is skewed to basic and acidic residues. The segment covering 162–175 (ADDSDNESSSEDYS) has biased composition (acidic residues). Over residues 200-210 (RGKNKVAKAKK) the composition is skewed to basic residues. Basic and acidic residues predominate over residues 211–237 (GGRDDENSKNSKNERESNRKNQKDAKF). In terms of domain architecture, tr-type G spans 343–513 (TRAPVVTIMG…LLQSEVLELT (171 aa)). Residues 352–359 (GHVDHGKT) are G1. 352 to 359 (GHVDHGKT) lines the GTP pocket. Residues 377-381 (GITQH) are G2. The tract at residues 399 to 402 (DTPG) is G3. Residues 399 to 403 (DTPGH) and 453 to 456 (NKID) each bind GTP. The segment at 453–456 (NKID) is G4. The G5 stretch occupies residues 489-491 (SAK).

Belongs to the TRAFAC class translation factor GTPase superfamily. Classic translation factor GTPase family. IF-2 subfamily.

It localises to the cytoplasm. One of the essential components for the initiation of protein synthesis. Protects formylmethionyl-tRNA from spontaneous hydrolysis and promotes its binding to the 30S ribosomal subunits. Also involved in the hydrolysis of GTP during the formation of the 70S ribosomal complex. The protein is Translation initiation factor IF-2 of Haemophilus influenzae (strain PittGG).